The following is a 467-amino-acid chain: Indoleacetamide hydrolase (467 aa).

Active-site charge relay system residues include lysine 74 and serine 149. Catalysis depends on serine 173, which acts as the Acyl-ester intermediate.

The protein belongs to the amidase family.

Its pathway is plant hormone metabolism; auxin biosynthesis. Hydrolyzes indole-3-acetamide (IAM) into indole-3-acetic acid (IAA). This chain is Indoleacetamide hydrolase (TA-iaaH), found in Agrobacterium vitis (Rhizobium vitis).